The chain runs to 536 residues: CTP synthase (536 aa).

Positions 1 to 267 (MSKFVFVTGG…CKQTLNCLEL (267 aa)) are amidoligase domain. Residue Ser13 coordinates CTP. Residue Ser13 participates in UTP binding. ATP-binding positions include 14 to 19 (SIGKGI) and Asp71. The Mg(2+) site is built by Asp71 and Glu141. Residues 148–150 (DIE), 188–193 (KTKPTQ), and Lys224 each bind CTP. UTP-binding positions include 188–193 (KTKPTQ) and Lys224. One can recognise a Glutamine amidotransferase type-1 domain in the interval 292-534 (KVALVGKYIE…IKASQEKLEQ (243 aa)). Residue Gly354 coordinates L-glutamine. Cys381 functions as the Nucleophile; for glutamine hydrolysis in the catalytic mechanism. Residues 382 to 385 (LGMQ), Glu405, and Arg462 contribute to the L-glutamine site. Catalysis depends on residues His507 and Glu509.

Belongs to the CTP synthase family. In terms of assembly, homotetramer.

It catalyses the reaction UTP + L-glutamine + ATP + H2O = CTP + L-glutamate + ADP + phosphate + 2 H(+). The catalysed reaction is L-glutamine + H2O = L-glutamate + NH4(+). It carries out the reaction UTP + NH4(+) + ATP = CTP + ADP + phosphate + 2 H(+). It functions in the pathway pyrimidine metabolism; CTP biosynthesis via de novo pathway; CTP from UDP: step 2/2. Its activity is regulated as follows. Allosterically activated by GTP, when glutamine is the substrate; GTP has no effect on the reaction when ammonia is the substrate. The allosteric effector GTP functions by stabilizing the protein conformation that binds the tetrahedral intermediate(s) formed during glutamine hydrolysis. Inhibited by the product CTP, via allosteric rather than competitive inhibition. Functionally, catalyzes the ATP-dependent amination of UTP to CTP with either L-glutamine or ammonia as the source of nitrogen. Regulates intracellular CTP levels through interactions with the four ribonucleotide triphosphates. This chain is CTP synthase, found in Prochlorococcus marinus subsp. pastoris (strain CCMP1986 / NIES-2087 / MED4).